The following is a 370-amino-acid chain: Gibberellin 3-beta-dioxygenase 2-2 (370 aa).

The Fe2OG dioxygenase domain occupies 205–306 (MTATMHLNWY…RISLGYFLGP (102 aa)). His-229, Asp-231, and His-287 together coordinate Fe cation. Residue Arg-297 is part of the active site.

The protein belongs to the iron/ascorbate-dependent oxidoreductase family. GA3OX subfamily. Requires L-ascorbate as cofactor. It depends on Fe cation as a cofactor.

The catalysed reaction is gibberellin A20 + 2-oxoglutarate + O2 = gibberellin A1 + succinate + CO2. Its function is as follows. Converts the inactive gibberellin precursors GA9 and GA20 in the bioactives gibberellins GA4 and GA1. The polypeptide is Gibberellin 3-beta-dioxygenase 2-2 (GA3ox2-2) (Triticum aestivum (Wheat)).